The primary structure comprises 126 residues: Fluoride-specific ion channel FluC (126 aa).

4 consecutive transmembrane segments (helical) span residues 3-23 (PYLL…RFLI), 37-57 (VGTL…ALYF), 68-88 (LVIT…LETV), and 101-121 (TNIT…MMLF). Positions 75 and 78 each coordinate Na(+).

The protein belongs to the fluoride channel Fluc/FEX (TC 1.A.43) family.

It localises to the cell inner membrane. The catalysed reaction is fluoride(in) = fluoride(out). With respect to regulation, na(+) is not transported, but it plays an essential structural role and its presence is essential for fluoride channel function. In terms of biological role, fluoride-specific ion channel. Important for reducing fluoride concentration in the cell, thus reducing its toxicity. In Sulfurovum sp. (strain NBC37-1), this protein is Fluoride-specific ion channel FluC.